The chain runs to 305 residues: Ribonuclease Z (305 aa).

Residues His-61, His-63, Asp-65, His-66, His-141, Asp-209, and His-268 each coordinate Zn(2+). Residue Asp-65 is the Proton acceptor of the active site.

It belongs to the RNase Z family. Homodimer. Zn(2+) serves as cofactor.

It catalyses the reaction Endonucleolytic cleavage of RNA, removing extra 3' nucleotides from tRNA precursor, generating 3' termini of tRNAs. A 3'-hydroxy group is left at the tRNA terminus and a 5'-phosphoryl group is left at the trailer molecule.. Functionally, zinc phosphodiesterase, which displays some tRNA 3'-processing endonuclease activity. Probably involved in tRNA maturation, by removing a 3'-trailer from precursor tRNA. This is Ribonuclease Z from Clostridioides difficile (strain 630) (Peptoclostridium difficile).